The sequence spans 385 residues: Carbamoyl phosphate synthase small chain (385 aa).

Residues Met-1 to Phe-196 are CPSase. Residues Ser-51, Gly-245, and Gly-247 each contribute to the L-glutamine site. The Glutamine amidotransferase type-1 domain occupies His-197 to Ser-384. Cys-273 serves as the catalytic Nucleophile. 4 residues coordinate L-glutamine: Leu-274, Gln-277, Asn-315, and Phe-318. Active-site residues include His-357 and Glu-359.

The protein belongs to the CarA family. Composed of two chains; the small (or glutamine) chain promotes the hydrolysis of glutamine to ammonia, which is used by the large (or ammonia) chain to synthesize carbamoyl phosphate. Tetramer of heterodimers (alpha,beta)4.

It catalyses the reaction hydrogencarbonate + L-glutamine + 2 ATP + H2O = carbamoyl phosphate + L-glutamate + 2 ADP + phosphate + 2 H(+). It carries out the reaction L-glutamine + H2O = L-glutamate + NH4(+). Its pathway is amino-acid biosynthesis; L-arginine biosynthesis; carbamoyl phosphate from bicarbonate: step 1/1. The protein operates within pyrimidine metabolism; UMP biosynthesis via de novo pathway; (S)-dihydroorotate from bicarbonate: step 1/3. Small subunit of the glutamine-dependent carbamoyl phosphate synthetase (CPSase). CPSase catalyzes the formation of carbamoyl phosphate from the ammonia moiety of glutamine, carbonate, and phosphate donated by ATP, constituting the first step of 2 biosynthetic pathways, one leading to arginine and/or urea and the other to pyrimidine nucleotides. The small subunit (glutamine amidotransferase) binds and cleaves glutamine to supply the large subunit with the substrate ammonia. The chain is Carbamoyl phosphate synthase small chain from Buchnera aphidicola subsp. Schizaphis graminum (strain Sg).